Reading from the N-terminus, the 79-residue chain is UPF0150 protein ssr1765 (79 aa).

Belongs to the UPF0150 family.

This is UPF0150 protein ssr1765 from Synechocystis sp. (strain ATCC 27184 / PCC 6803 / Kazusa).